Reading from the N-terminus, the 355-residue chain is tRNA N6-adenosine threonylcarbamoyltransferase (355 aa).

Positions 111 and 115 each coordinate Fe cation. Substrate contacts are provided by residues 134-138, Asp167, Gly180, Asp184, and Asn279; that span reads LVSGG. A Fe cation-binding site is contributed by Asp307.

Belongs to the KAE1 / TsaD family. The cofactor is Fe(2+).

It is found in the cytoplasm. It catalyses the reaction L-threonylcarbamoyladenylate + adenosine(37) in tRNA = N(6)-L-threonylcarbamoyladenosine(37) in tRNA + AMP + H(+). Functionally, required for the formation of a threonylcarbamoyl group on adenosine at position 37 (t(6)A37) in tRNAs that read codons beginning with adenine. Is involved in the transfer of the threonylcarbamoyl moiety of threonylcarbamoyl-AMP (TC-AMP) to the N6 group of A37, together with TsaE and TsaB. TsaD likely plays a direct catalytic role in this reaction. The polypeptide is tRNA N6-adenosine threonylcarbamoyltransferase (Picosynechococcus sp. (strain ATCC 27264 / PCC 7002 / PR-6) (Agmenellum quadruplicatum)).